Reading from the N-terminus, the 102-residue chain is Fe-S protein maturation auxiliary factor YitW (102 aa).

The protein belongs to the MIP18 family.

Functionally, involved in the maturation of iron-sulfur (Fe-S) proteins. May function as a Fe-S cluster carrier. The chain is Fe-S protein maturation auxiliary factor YitW (yitW) from Bacillus subtilis (strain 168).